A 270-amino-acid chain; its full sequence is Putative phosphatase YxeH (270 aa).

Residue Asp-8 is the Nucleophile of the active site. Asp-8 contacts Mg(2+). Met-9 lines the phosphate pocket. Residue Asp-10 coordinates Mg(2+). Residues 42-43 and Lys-196 contribute to the phosphate site; that span reads TG. Asp-219 is a binding site for Mg(2+). Position 222 (Asn-222) interacts with phosphate.

This sequence belongs to the HAD-like hydrolase superfamily. Cof family. It depends on Mg(2+) as a cofactor.

In Bacillus subtilis (strain 168), this protein is Putative phosphatase YxeH (yxeH).